The primary structure comprises 860 residues: LPS-assembly protein LptD (860 aa).

An N-terminal signal peptide occupies residues 1–21; the sequence is MTKRYFSLLAVCSAIATSTFA.

It belongs to the LptD family. In terms of assembly, component of the lipopolysaccharide transport and assembly complex. Interacts with LptE and LptA.

The protein resides in the cell outer membrane. In terms of biological role, together with LptE, is involved in the assembly of lipopolysaccharide (LPS) at the surface of the outer membrane. The polypeptide is LPS-assembly protein LptD (Saccharophagus degradans (strain 2-40 / ATCC 43961 / DSM 17024)).